The chain runs to 296 residues: 33 kDa chaperonin (296 aa).

Cystine bridges form between C233/C235 and C267/C270.

This sequence belongs to the HSP33 family. Under oxidizing conditions two disulfide bonds are formed involving the reactive cysteines. Under reducing conditions zinc is bound to the reactive cysteines and the protein is inactive.

Its subcellular location is the cytoplasm. In terms of biological role, redox regulated molecular chaperone. Protects both thermally unfolding and oxidatively damaged proteins from irreversible aggregation. Plays an important role in the bacterial defense system toward oxidative stress. This chain is 33 kDa chaperonin, found in Actinobacillus pleuropneumoniae serotype 3 (strain JL03).